Here is a 414-residue protein sequence, read N- to C-terminus: 3-oxo-isoapionate-4-phosphate transcarboxylase/hydrolase (414 aa).

Positions 180, 182, and 183 each coordinate Mg(2+). Lysine 180 bears the N6-carboxylysine mark.

This sequence belongs to the RuBisCO large chain family. Mg(2+) is required as a cofactor.

It catalyses the reaction 3-oxoisoapionate 4-phosphate + H2O = (2R)-3-phosphoglycerate + glycolate + H(+). The protein operates within carbohydrate metabolism. Functionally, involved in catabolism of D-apiose. Catalyzes the conversion of 3-oxo-isoapionate 4-phosphate to 3-phosphoglycerate and glycolate. The sequence is that of 3-oxo-isoapionate-4-phosphate transcarboxylase/hydrolase from Xanthobacter autotrophicus (strain ATCC BAA-1158 / Py2).